A 254-amino-acid polypeptide reads, in one-letter code: Persulfide dioxygenase ETHE1, mitochondrial (254 aa).

The transit peptide at 1–7 directs the protein to the mitochondrion; the sequence is MAEAVLR. Phosphoserine is present on residues serine 14 and serine 19. N6-acetyllysine is present on lysine 66. Positions 79, 135, and 154 each coordinate Fe cation. Position 172 is an N6-acetyllysine; alternate (lysine 172). The residue at position 172 (lysine 172) is an N6-succinyllysine; alternate.

It belongs to the metallo-beta-lactamase superfamily. Glyoxalase II family. Homodimer. Monomer. Interacts with TST. May interact with RELA. Fe(2+) serves as cofactor. As to expression, ubiquitously expressed.

The protein resides in the cytoplasm. It is found in the nucleus. Its subcellular location is the mitochondrion matrix. It carries out the reaction S-sulfanylglutathione + O2 + H2O = sulfite + glutathione + 2 H(+). With respect to regulation, glutathione increases enzyme activity. In terms of biological role, sulfur dioxygenase that plays an essential role in hydrogen sulfide catabolism in the mitochondrial matrix. Hydrogen sulfide (H(2)S) is first oxidized by SQRDL, giving rise to cysteine persulfide residues. ETHE1 consumes molecular oxygen to catalyze the oxidation of the persulfide, once it has been transferred to a thiophilic acceptor, such as glutathione (R-SSH). Plays an important role in metabolic homeostasis in mitochondria by metabolizing hydrogen sulfide and preventing the accumulation of supraphysiological H(2)S levels that have toxic effects, due to the inhibition of cytochrome c oxidase. First described as a protein that can shuttle between the nucleus and the cytoplasm and suppress p53-induced apoptosis by sequestering the transcription factor RELA/NFKB3 in the cytoplasm and preventing its accumulation in the nucleus. The protein is Persulfide dioxygenase ETHE1, mitochondrial (ETHE1) of Homo sapiens (Human).